A 959-amino-acid polypeptide reads, in one-letter code: Transcription factor 1 (959 aa).

2 C2H2-type zinc fingers span residues 2 to 24 (VFCTYCGHSFTRDEHLERHILTH) and 30 to 52 (FKCFTCHMSFARRDLLQGHYTVH). The segment at residues 79–105 (CSNCAKTKTKCDKKFPCSRCASRNLRC) is a DNA-binding region (zn(2)-C6 fungal-type). The interval 154-226 (PTGHVEESSK…SFPGFDDYNQ (73 aa)) is disordered. Residues 163–178 (KSSSPSGSPTSISHNS) show a composition bias toward low complexity.

It is found in the nucleus. Functionally, elsinochromes biosynthesis cluster-specific transcription factor that positively regulates the expression of cluster genes including RDT1, PKS1, PRF1 and HP1, and subsequent elsinochromes production. The chain is Transcription factor 1 from Elsinoe fawcettii (Citrus scab fungus).